The primary structure comprises 149 residues: Calmodulin-5/6/7/8 (149 aa).

Residue Ala-2 is modified to N-acetylalanine. 4 EF-hand domains span residues 8–43 (DQIS…LGQN), 44–79 (PTEA…KMKD), 81–116 (DSEE…LGEK), and 117–149 (LTDE…MMAK). Positions 21, 23, 25, 27, 32, 57, 59, 61, 63, 68, 94, 96, 98, and 105 each coordinate Ca(2+). Lys-116 is subject to N6,N6,N6-trimethyllysine. Ca(2+) is bound by residues Asp-130, Asp-132, Asp-134, Gln-136, and Glu-141.

The protein belongs to the calmodulin family. High expression of PCM5 and 8 in stolon tips and stems, moderate in roots, and low in leaves. Steady-state expression of PCM6 in all the tissues tested, except in the leaves where the expression is lower.

Calmodulin mediates the control of a large number of enzymes, ion channels and other proteins by Ca(2+). Among the enzymes to be stimulated by the calmodulin-Ca(2+) complex are a number of protein kinases and phosphatases. The chain is Calmodulin-5/6/7/8 (PCM5) from Solanum tuberosum (Potato).